Reading from the N-terminus, the 221-residue chain is Protein Thf1 (221 aa).

A coiled-coil region spans residues 174-213 (TKERVEKDVNLYKSSLDKIEKALELIEMNIKDEKRRNKER).

It belongs to the THF1 family.

Its function is as follows. May be involved in photosynthetic membrane biogenesis. The protein is Protein Thf1 of Prochlorococcus marinus (strain MIT 9211).